A 210-amino-acid polypeptide reads, in one-letter code: MADTALNANLRKTATKSIVKEIRNNGGIPGVVYGKHVGSMAISVDAKDLKNILGSVTGRNTLINMNINGSKQTVMVKSLQMDPMHQNIRHVDFQQVSENTKIRTVIPVQLVGTPKGVAMGGVIQHDLRSAEIECLPNRIPEAIQVDISGLEIGDTLSVSDLNLPPGVKILDHPHTTVVGLATIKAPEPAGQPEVPPEPAEEAKAKTIEKE.

Residues 185–210 (APEPAGQPEVPPEPAEEAKAKTIEKE) are disordered. Residues 200-210 (EEAKAKTIEKE) are compositionally biased toward basic and acidic residues.

It belongs to the bacterial ribosomal protein bL25 family. CTC subfamily. Part of the 50S ribosomal subunit; part of the 5S rRNA/L5/L18/L25 subcomplex. Contacts the 5S rRNA. Binds to the 5S rRNA independently of L5 and L18.

Functionally, this is one of the proteins that binds to the 5S RNA in the ribosome where it forms part of the central protuberance. This chain is Large ribosomal subunit protein bL25, found in Desulforamulus reducens (strain ATCC BAA-1160 / DSM 100696 / MI-1) (Desulfotomaculum reducens).